Reading from the N-terminus, the 249-residue chain is tRNA pseudouridine synthase A (249 aa).

Catalysis depends on aspartate 54, which acts as the Nucleophile. Tyrosine 112 is a substrate binding site.

The protein belongs to the tRNA pseudouridine synthase TruA family. As to quaternary structure, homodimer.

The enzyme catalyses uridine(38/39/40) in tRNA = pseudouridine(38/39/40) in tRNA. In terms of biological role, formation of pseudouridine at positions 38, 39 and 40 in the anticodon stem and loop of transfer RNAs. This Latilactobacillus sakei subsp. sakei (strain 23K) (Lactobacillus sakei subsp. sakei) protein is tRNA pseudouridine synthase A.